Consider the following 433-residue polypeptide: Alpha-(1-&gt;3)-arabinofuranosyltransferase (433 aa).

10 consecutive transmembrane segments (helical) span residues 118–138 (LFIS…LRMF), 140–160 (FTLT…TETV), 164–184 (LVFT…LRWL), 197–217 (LAIG…LLPL), 224–244 (ALVA…PLVS), 280–300 (WLIL…LWLL), 310–330 (LFWF…VMSL), 333–353 (GYYS…NSVI), 356–376 (WPAW…LFNW), and 385–405 (YLKI…VLYF).

The protein belongs to the glycosyltransferase 87 family.

Its subcellular location is the cell membrane. It catalyses the reaction Adds an alpha-D-arabinofuranosyl group from trans,octacis-decaprenylphospho-beta-D-arabinofuranose at the 3-O-position of an alpha-(1-&gt;5)-arabinofuranan chain attached to a beta-(1-&gt;5)-galactofuranan chain.. It functions in the pathway cell wall biogenesis; cell wall polysaccharide biosynthesis. Its function is as follows. Involved in the biosynthesis of the arabinogalactan (AG) region of the mycolylarabinogalactan-peptidoglycan (mAGP) complex, an essential component of the mycobacterial cell wall. Catalyzes the addition of an arabinofuranosyl (Araf) residue from the sugar donor beta-D-arabinofuranosyl-1-monophosphoryldecaprenol (DPA) on the C-3 of an alpha-(1-&gt;5)-linked Araf from the arabinan backbone of AG. The chain is Alpha-(1-&gt;3)-arabinofuranosyltransferase (aftC) from Mycobacterium tuberculosis (strain CDC 1551 / Oshkosh).